Here is a 1059-residue protein sequence, read N- to C-terminus: Endo-1,4-beta-xylanase A (1059 aa).

The N-terminal stretch at 1–30 is a signal peptide; the sequence is MQVRKRRGLLDVSTAVLVGILAGFLGVVLA. The segment at 47-199 is A-1; it reads SSLETVLALS…LDKVQVLAPK (153 aa). An A-2 region spans residues 200 to 354; the sequence is ESGPKVIYET…DDVKIVDTTS (155 aa). The GH10 domain maps to 364–692; sequence EKEIPALKEV…KLAYWAIVAP (329 aa). Glu-502 (proton donor) is an active-site residue. The Nucleophile role is filled by Glu-608. 2 CBM-cenC domains span residues 700–870 and 871–1059; these read KESR…LEGI and MVAT…RLIK.

The protein belongs to the glycosyl hydrolase 10 (cellulase F) family.

The enzyme catalyses Endohydrolysis of (1-&gt;4)-beta-D-xylosidic linkages in xylans.. The protein is Endo-1,4-beta-xylanase A (xynA) of Thermotoga maritima (strain ATCC 43589 / DSM 3109 / JCM 10099 / NBRC 100826 / MSB8).